Reading from the N-terminus, the 328-residue chain is Formimidoylglutamase (328 aa).

His-133, Asp-159, His-161, Asp-163, Asp-253, and Asp-255 together coordinate Mn(2+).

Belongs to the arginase family. Mn(2+) serves as cofactor.

It carries out the reaction N-formimidoyl-L-glutamate + H2O = formamide + L-glutamate. Its pathway is amino-acid degradation; L-histidine degradation into L-glutamate; L-glutamate from N-formimidoyl-L-glutamate (hydrolase route): step 1/1. In terms of biological role, catalyzes the conversion of N-formimidoyl-L-glutamate to L-glutamate and formamide. The chain is Formimidoylglutamase from Streptococcus pyogenes serotype M28 (strain MGAS6180).